The sequence spans 162 residues: Phosphopantetheine adenylyltransferase (162 aa).

Position 9 (Ser-9) interacts with substrate. Residues 9 to 10 (SF) and His-17 contribute to the ATP site. Positions 41, 77, and 91 each coordinate substrate. ATP is bound by residues 92 to 94 (GLR), Glu-102, and 126 to 132 (YAFLSSS).

Belongs to the bacterial CoaD family. As to quaternary structure, homohexamer. It depends on Mg(2+) as a cofactor.

The protein localises to the cytoplasm. The catalysed reaction is (R)-4'-phosphopantetheine + ATP + H(+) = 3'-dephospho-CoA + diphosphate. Its pathway is cofactor biosynthesis; coenzyme A biosynthesis; CoA from (R)-pantothenate: step 4/5. Reversibly transfers an adenylyl group from ATP to 4'-phosphopantetheine, yielding dephospho-CoA (dPCoA) and pyrophosphate. In Frankia alni (strain DSM 45986 / CECT 9034 / ACN14a), this protein is Phosphopantetheine adenylyltransferase.